Here is a 243-residue protein sequence, read N- to C-terminus: Ubiquinone/menaquinone biosynthesis C-methyltransferase UbiE (243 aa).

S-adenosyl-L-methionine is bound by residues Thr69, Asp90, and 116-117 (DA).

The protein belongs to the class I-like SAM-binding methyltransferase superfamily. MenG/UbiE family.

The catalysed reaction is a 2-demethylmenaquinol + S-adenosyl-L-methionine = a menaquinol + S-adenosyl-L-homocysteine + H(+). It carries out the reaction a 2-methoxy-6-(all-trans-polyprenyl)benzene-1,4-diol + S-adenosyl-L-methionine = a 5-methoxy-2-methyl-3-(all-trans-polyprenyl)benzene-1,4-diol + S-adenosyl-L-homocysteine + H(+). It functions in the pathway quinol/quinone metabolism; menaquinone biosynthesis; menaquinol from 1,4-dihydroxy-2-naphthoate: step 2/2. The protein operates within cofactor biosynthesis; ubiquinone biosynthesis. In terms of biological role, methyltransferase required for the conversion of demethylmenaquinol (DMKH2) to menaquinol (MKH2) and the conversion of 2-polyprenyl-6-methoxy-1,4-benzoquinol (DDMQH2) to 2-polyprenyl-3-methyl-6-methoxy-1,4-benzoquinol (DMQH2). This is Ubiquinone/menaquinone biosynthesis C-methyltransferase UbiE from Paraburkholderia phytofirmans (strain DSM 17436 / LMG 22146 / PsJN) (Burkholderia phytofirmans).